The following is a 469-amino-acid chain: MSSGKITQVIGPVVDVEFGSDAKLPEINNALIVYKDVNGLKTKITLEVALELGDGAVRTIAMESTDGLTRGLEVLDTGKAVSVPVGESTLGRVFNVLGDVIDGGEDFPADAERNPIHKKAPTFDELSTANEVLVTGIKVVDLLAPYLKGGKVGLFGGAGVGKTVLIQELIHNIAQEHGGISVFTGVGERTREGNDLYWEMKESGVIEKTAMVFGQMNEPPGARMRVALTGLTIAEYFRDVQGQDVLLFIDNIFRFTQAGSEVSALLGRMPSAVGYQPTLATEMGQLQERITSTKKGSVTSIQAIYVPADDYTDPAPATAFAHLDATTNLERRLTQMGIYPAVDPLASSSRAITPEIVGEEHYEVAMEVQRVLQRYKELQDIIAILGMDELSDDEKILVGRARRIQFFLSQNFHVAEQFTGQPGSYVPIDKTVHDFKEILEGKYDEVPEDAFRGVGPIEDVLAKAKSMGY.

156 to 163 (GGAGVGKT) lines the ATP pocket.

This sequence belongs to the ATPase alpha/beta chains family. F-type ATPases have 2 components, CF(1) - the catalytic core - and CF(0) - the membrane proton channel. CF(1) has five subunits: alpha(3), beta(3), gamma(1), delta(1), epsilon(1). CF(0) has three main subunits: a(1), b(2) and c(9-12). The alpha and beta chains form an alternating ring which encloses part of the gamma chain. CF(1) is attached to CF(0) by a central stalk formed by the gamma and epsilon chains, while a peripheral stalk is formed by the delta and b chains.

Its subcellular location is the cell membrane. The enzyme catalyses ATP + H2O + 4 H(+)(in) = ADP + phosphate + 5 H(+)(out). Functionally, produces ATP from ADP in the presence of a proton gradient across the membrane. The catalytic sites are hosted primarily by the beta subunits. This Lactococcus lactis subsp. cremoris (strain SK11) protein is ATP synthase subunit beta.